The primary structure comprises 203 residues: ATP-dependent Clp protease proteolytic subunit (203 aa).

Serine 107 serves as the catalytic Nucleophile. Histidine 132 is an active-site residue.

The protein belongs to the peptidase S14 family. In terms of assembly, fourteen ClpP subunits assemble into 2 heptameric rings which stack back to back to give a disk-like structure with a central cavity, resembling the structure of eukaryotic proteasomes.

It is found in the cytoplasm. It catalyses the reaction Hydrolysis of proteins to small peptides in the presence of ATP and magnesium. alpha-casein is the usual test substrate. In the absence of ATP, only oligopeptides shorter than five residues are hydrolyzed (such as succinyl-Leu-Tyr-|-NHMec, and Leu-Tyr-Leu-|-Tyr-Trp, in which cleavage of the -Tyr-|-Leu- and -Tyr-|-Trp bonds also occurs).. Functionally, cleaves peptides in various proteins in a process that requires ATP hydrolysis. Has a chymotrypsin-like activity. Plays a major role in the degradation of misfolded proteins. The chain is ATP-dependent Clp protease proteolytic subunit from Shewanella sediminis (strain HAW-EB3).